Consider the following 772-residue polypeptide: Phosphoribosylformylglycinamidine synthase subunit PurL (772 aa).

The active site involves His62. Residues Tyr65 and Lys109 each contribute to the ATP site. Glu111 contributes to the Mg(2+) binding site. Substrate-binding positions include 112–115 (SHNH) and Arg134. The active-site Proton acceptor is the His113. Asp135 provides a ligand contact to Mg(2+). Residue Gln259 participates in substrate binding. Asp287 serves as a coordination point for Mg(2+). Position 331–333 (331–333 (ESQ)) interacts with substrate. 2 residues coordinate ATP: Asp519 and Gly556. Asn557 contributes to the Mg(2+) binding site. Position 559 (Ser559) interacts with substrate.

The protein belongs to the FGAMS family. As to quaternary structure, monomer. Part of the FGAM synthase complex composed of 1 PurL, 1 PurQ and 2 PurS subunits.

It localises to the cytoplasm. The catalysed reaction is N(2)-formyl-N(1)-(5-phospho-beta-D-ribosyl)glycinamide + L-glutamine + ATP + H2O = 2-formamido-N(1)-(5-O-phospho-beta-D-ribosyl)acetamidine + L-glutamate + ADP + phosphate + H(+). Its pathway is purine metabolism; IMP biosynthesis via de novo pathway; 5-amino-1-(5-phospho-D-ribosyl)imidazole from N(2)-formyl-N(1)-(5-phospho-D-ribosyl)glycinamide: step 1/2. In terms of biological role, part of the phosphoribosylformylglycinamidine synthase complex involved in the purines biosynthetic pathway. Catalyzes the ATP-dependent conversion of formylglycinamide ribonucleotide (FGAR) and glutamine to yield formylglycinamidine ribonucleotide (FGAM) and glutamate. The FGAM synthase complex is composed of three subunits. PurQ produces an ammonia molecule by converting glutamine to glutamate. PurL transfers the ammonia molecule to FGAR to form FGAM in an ATP-dependent manner. PurS interacts with PurQ and PurL and is thought to assist in the transfer of the ammonia molecule from PurQ to PurL. This chain is Phosphoribosylformylglycinamidine synthase subunit PurL, found in Leifsonia xyli subsp. xyli (strain CTCB07).